A 290-amino-acid polypeptide reads, in one-letter code: Thymidylate synthase (290 aa).

Residue R31 participates in dUMP binding. H61 is a (6R)-5,10-methylene-5,6,7,8-tetrahydrofolate binding site. 152-153 is a binding site for dUMP; the sequence is RR. C172 (nucleophile) is an active-site residue. Residues 192–195, N203, and 233–235 each bind dUMP; these read RSAD and HIY. Residue D195 participates in (6R)-5,10-methylene-5,6,7,8-tetrahydrofolate binding. (6R)-5,10-methylene-5,6,7,8-tetrahydrofolate is bound at residue A289.

It belongs to the thymidylate synthase family. Bacterial-type ThyA subfamily. Homodimer.

It is found in the cytoplasm. The catalysed reaction is dUMP + (6R)-5,10-methylene-5,6,7,8-tetrahydrofolate = 7,8-dihydrofolate + dTMP. Its pathway is pyrimidine metabolism; dTTP biosynthesis. Its function is as follows. Catalyzes the reductive methylation of 2'-deoxyuridine-5'-monophosphate (dUMP) to 2'-deoxythymidine-5'-monophosphate (dTMP) while utilizing 5,10-methylenetetrahydrofolate (mTHF) as the methyl donor and reductant in the reaction, yielding dihydrofolate (DHF) as a by-product. This enzymatic reaction provides an intracellular de novo source of dTMP, an essential precursor for DNA biosynthesis. The protein is Thymidylate synthase of Psychrobacter cryohalolentis (strain ATCC BAA-1226 / DSM 17306 / VKM B-2378 / K5).